Reading from the N-terminus, the 46-residue chain is Defensin-like protein AX2 (46 aa).

Disulfide bonds link Cys3-Cys46, Cys14-Cys34, Cys20-Cys40, and Cys24-Cys42.

In terms of tissue distribution, leaves and flowers.

Strong inhibiting activity against C.beticola and other filamentous fungi. Little or no effect against bacteria. This is Defensin-like protein AX2 from Beta vulgaris (Sugar beet).